The chain runs to 432 residues: RING finger protein 44 (432 aa).

A disordered region spans residues 1 to 86; it reads MRPWALAVTR…GGSPRMLHPA (86 aa). The segment covering 56 to 65 has biased composition (pro residues); sequence QQPPSRPPHL. An RING-type; atypical zinc finger spans residues 380-421; that stretch reads CVVCFSDFEARQLLRVLPCNHEFHTKCVDKWLKANRTCPICR.

The sequence is that of RING finger protein 44 (RNF44) from Homo sapiens (Human).